Here is a 342-residue protein sequence, read N- to C-terminus: Anthranilate phosphoribosyltransferase (342 aa).

5-phospho-alpha-D-ribose 1-diphosphate contacts are provided by residues Gly-83, 86-87 (GD), Thr-91, 93-96 (NIST), 111-119 (KHGGRSVSS), and Ser-123. Gly-83 contributes to the anthranilate binding site. Ser-95 provides a ligand contact to Mg(2+). Residue Arg-169 participates in anthranilate binding. The Mg(2+) site is built by Asp-228 and Glu-229.

It belongs to the anthranilate phosphoribosyltransferase family. As to quaternary structure, homodimer. The cofactor is Mg(2+).

It carries out the reaction N-(5-phospho-beta-D-ribosyl)anthranilate + diphosphate = 5-phospho-alpha-D-ribose 1-diphosphate + anthranilate. It participates in amino-acid biosynthesis; L-tryptophan biosynthesis; L-tryptophan from chorismate: step 2/5. Its function is as follows. Catalyzes the transfer of the phosphoribosyl group of 5-phosphorylribose-1-pyrophosphate (PRPP) to anthranilate to yield N-(5'-phosphoribosyl)-anthranilate (PRA). The chain is Anthranilate phosphoribosyltransferase from Chromobacterium violaceum (strain ATCC 12472 / DSM 30191 / JCM 1249 / CCUG 213 / NBRC 12614 / NCIMB 9131 / NCTC 9757 / MK).